Reading from the N-terminus, the 489-residue chain is Beta-glucosidase 14 (489 aa).

Positions 1 to 21 (MTSKYFSVLVFIILASNEVVA) are cleaved as a signal peptide. Gln49 contributes to the a beta-D-glucoside binding site. N-linked (GlcNAc...) asparagine glycosylation is present at Asn80. Residues His153 and 198–199 (NE) contribute to the a beta-D-glucoside site. Residue Glu199 is the Proton donor of the active site. An intrachain disulfide couples Cys218 to Cys226. Asn225 carries N-linked (GlcNAc...) asparagine glycosylation. Residue Tyr343 coordinates a beta-D-glucoside. N-linked (GlcNAc...) asparagine glycosylation is present at Asn357. Residues Glu396, Trp441, 448-449 (EW), and Phe457 contribute to the a beta-D-glucoside site. Glu396 (nucleophile) is an active-site residue.

It belongs to the glycosyl hydrolase 1 family.

The catalysed reaction is Hydrolysis of terminal, non-reducing beta-D-glucosyl residues with release of beta-D-glucose.. The polypeptide is Beta-glucosidase 14 (Arabidopsis thaliana (Mouse-ear cress)).